We begin with the raw amino-acid sequence, 214 residues long: Nicotinamidase (214 aa).

Aspartate 18 functions as the Proton acceptor in the catalytic mechanism. The a divalent metal cation site is built by aspartate 56, histidine 58, histidine 62, and histidine 91. Residue lysine 116 is part of the active site. Cysteine 161 (nucleophile) is an active-site residue.

Belongs to the isochorismatase family. The cofactor is a divalent metal cation.

It catalyses the reaction nicotinamide + H2O = nicotinate + NH4(+). It participates in cofactor biosynthesis; nicotinate biosynthesis; nicotinate from nicotinamide: step 1/1. Its function is as follows. Catalyzes the deamidation of nicotinamide (NAM) into nicotinate (Na). Functions in the deamidating salvage pathway for production of NAD from nicotinamide. In Acinetobacter baylyi (strain ATCC 33305 / BD413 / ADP1), this protein is Nicotinamidase.